The following is a 349-amino-acid chain: Methylthioribose-1-phosphate isomerase (349 aa).

Substrate contacts are provided by residues 51–53, Arg-94, and Gln-199; that span reads RGA. Asp-240 acts as the Proton donor in catalysis. 250–251 contacts substrate; it reads NK.

This sequence belongs to the eIF-2B alpha/beta/delta subunits family. MtnA subfamily. In terms of assembly, homodimer.

The catalysed reaction is 5-(methylsulfanyl)-alpha-D-ribose 1-phosphate = 5-(methylsulfanyl)-D-ribulose 1-phosphate. The protein operates within amino-acid biosynthesis; L-methionine biosynthesis via salvage pathway; L-methionine from S-methyl-5-thio-alpha-D-ribose 1-phosphate: step 1/6. In terms of biological role, catalyzes the interconversion of methylthioribose-1-phosphate (MTR-1-P) into methylthioribulose-1-phosphate (MTRu-1-P). This Bacillus cytotoxicus (strain DSM 22905 / CIP 110041 / 391-98 / NVH 391-98) protein is Methylthioribose-1-phosphate isomerase.